The primary structure comprises 316 residues: Diacylglycerol kinase (316 aa).

The region spanning 1 to 132 is the DAGKc domain; that stretch reads MRKRARIIYN…VDIGKMNNRY (132 aa). ATP is bound by residues 10–14, Thr-41, 67–73, and Thr-94; these read NPTSG and GDGTLNE. Residues Lys-213, Asp-216, and Tyr-218 each contribute to the Mg(2+) site. Glu-273 functions as the Proton acceptor in the catalytic mechanism.

It belongs to the diacylglycerol/lipid kinase family. As to quaternary structure, homodimer. Requires Mg(2+) as cofactor.

The enzyme catalyses a 1,2-diacyl-sn-glycerol + ATP = a 1,2-diacyl-sn-glycero-3-phosphate + ADP + H(+). Catalyzes the phosphorylation of diacylglycerol (DAG) into phosphatidic acid. Is a key enzyme involved in the production of lipoteichoic acid by reintroducing DAG formed from the breakdown of membrane phospholipids into the phosphatidylglycerol biosynthetic pathway. The polypeptide is Diacylglycerol kinase (dagK) (Staphylococcus epidermidis (strain ATCC 35984 / DSM 28319 / BCRC 17069 / CCUG 31568 / BM 3577 / RP62A)).